Consider the following 406-residue polypeptide: Probable 2,3-bisphosphoglycerate-independent phosphoglycerate mutase (406 aa).

It belongs to the BPG-independent phosphoglycerate mutase family. A-PGAM subfamily.

It catalyses the reaction (2R)-2-phosphoglycerate = (2R)-3-phosphoglycerate. Its pathway is carbohydrate degradation; glycolysis; pyruvate from D-glyceraldehyde 3-phosphate: step 3/5. Functionally, catalyzes the interconversion of 2-phosphoglycerate and 3-phosphoglycerate. The sequence is that of Probable 2,3-bisphosphoglycerate-independent phosphoglycerate mutase from Thermus thermophilus (strain ATCC BAA-163 / DSM 7039 / HB27).